Here is a 276-residue protein sequence, read N- to C-terminus: Rhomboid protease GlpG (276 aa).

Transmembrane regions (helical) follow at residues glycine 94–leucine 114, alanine 142–glycine 162, isoleucine 169–glutamine 189, phenylalanine 192–tryptophan 212, leucine 229–isoleucine 249, and glycine 252–glycine 272. The active-site Nucleophile is serine 201. Histidine 254 is an active-site residue.

Belongs to the peptidase S54 family.

It localises to the cell inner membrane. It catalyses the reaction Cleaves type-1 transmembrane domains using a catalytic dyad composed of serine and histidine that are contributed by different transmembrane domains.. Rhomboid-type serine protease that catalyzes intramembrane proteolysis. This is Rhomboid protease GlpG from Klebsiella pneumoniae subsp. pneumoniae (strain ATCC 700721 / MGH 78578).